Reading from the N-terminus, the 1047-residue chain is MRLLKPAWVHHDDKQIFSVDIHKDCTKFATGGQGSDCGRVVIWNLLPVLSDKAEFDADVPKMLCQMDQHLACVNCVRWSQNGQNLASGSDDKLIMIWRKSAGSSGVFGTGGMQKNHESWKCFYTLRGHDGDVLDLAWSPNDVYLASCSIDNTVIIWDAQAFPHSVATLKGHTGLVKGVSWDPLGRFLASQSDDRSIKIWNTMNWSLSHTITEPFEECGGTTHILRLSWSPDGQYLVSAHAMNGGGPTAQIIEREGWKCDKDFVGHRKAVTCVRFHNSILSRQENDGSPSKPLQYCCLAVGSRDRSLSVWMTALQRPMVVIHELFNASILDLTWGPQECLLMACSVDGSIACLKFTEEELGKAISEEEQNAIIRKMYGKNYVNGLGKSAPVLEHPQRLLLPQGDKPTKFPLSNNNEANQRPISKQTETRTKDGKRRITPMFIPLHEDGPTSLSMNIVSSSGSSTTALTSCSAAIGTLPAAAPTESAATPLMPLEPLVSKIDLGRLDSRLKTQPASQRRQSLPFDPGQSNELLRTPRLEEHQSSTCSPSNLNVTATGKSEFVKAALDYRLHVSNGHLKTQHGMLAKVTASDSKEMLWEFYVGSPLVNLNLCEKYAMLCSLDGSMRLISMETGCPVFPAISLTSSAVHCAFSPDNSLVGVLTECGLLRIWDIAKKVVSLAAGCLELLNKHGTAAQFSVTNQGMPLIGFPSGNSYSYSTSLQSWLVLATKDAIMYHGIRGTLPRDMDQMQQKFPLLSMQASSQNYFSFTGSMELRHSESWQQCAKIRFIENQIKLCEALQSLDELQHWHKMLTFQLATHGSEKRMRVFLDDLLSMPEPGISQFVPKLELMQCVLDTLKPHSEWNRLHSEYTELLKECKSERQKDIFATPAPPQQKTASSAGSSPRSGEATGEEVTEKDGATAVAAAVVAGSRMAVTTGTSTTTTTTASSSLSSSGSSSSTSGSGSSSSSSSTSSLSVPQPAPSLSPEIQTLDSPTVCIDDEILSASSSLPPLDTSPVEVSPASTSGGAASTSPAASVAGSAPVSSSKTDQT.

WD repeat units lie at residues 11–53, 68–107, 127–166, 170–209, 218–263, 264–319, and 323–364; these read HDDK…SDKA, QHLACVNCVRWSQNGQNLASGSDDKLIMIWRKSAGSSGVF, GHDGDVLDLAWSPNDVYLASCSIDNTVIIWDAQAFPHSVA, GHTGLVKGVSWDPLGRFLASQSDDRSIKIWNTMNWSLSHT, GGTT…KDFV, GHRK…PMVV, and LFNA…KAIS. Disordered stretches follow at residues 401–435, 509–549, 882–914, and 933–1047; these read QGDKPTKFPLSNNNEANQRPISKQTETRTKDGKRR, KTQP…PSNL, FATPAPPQQKTASSAGSSPRSGEATGEEVTEKD, and TGTS…TDQT. Composition is skewed to polar residues over residues 409–424 and 509–518; these read PLSNNNEANQRPISKQ and KTQPASQRRQ. Serine 519 is modified (phosphoserine). The segment covering 889–901 has biased composition (polar residues); sequence QQKTASSAGSSPR. Low complexity-rich tracts occupy residues 933 to 972 and 1015 to 1047; these read TGTSTTTTTTASSSLSSSGSSSSTSGSGSSSSSSSTSSLS and VSPASTSGGAASTSPAASVAGSAPVSSSKTDQT.

The protein belongs to the WD repeat HIR1 family.

The protein resides in the nucleus. Required for the periodic repression of histone gene transcription during the cell cycle. Required for replication-independent chromatin assembly. Promotes remodeling of sperm chromatin following fertilization via the incorporation of histone H3.3 and histone H4. This Drosophila melanogaster (Fruit fly) protein is Protein HIRA homolog (Hira).